The following is a 300-amino-acid chain: Fructose-bisphosphate aldolase class 1 (300 aa).

Glu181 acts as the Proton acceptor in catalysis. Lys218 (schiff-base intermediate with dihydroxyacetone-P) is an active-site residue.

This sequence belongs to the class I fructose-bisphosphate aldolase family.

It carries out the reaction beta-D-fructose 1,6-bisphosphate = D-glyceraldehyde 3-phosphate + dihydroxyacetone phosphate. It participates in carbohydrate degradation; glycolysis; D-glyceraldehyde 3-phosphate and glycerone phosphate from D-glucose: step 4/4. The chain is Fructose-bisphosphate aldolase class 1 (fda) from Synechocystis sp. (strain ATCC 27184 / PCC 6803 / Kazusa).